The following is a 290-amino-acid chain: MWKDLFVKKKKYAAIPSEPLRPEVPEGVMTKCPQCKKIMYTKELVKNLRVCLSCGYHHPMPARERIESVLDEGSFREYDAGMTSVNPLGFPGYIEKLEADRRKSGLNEAVVTGEGTLEGHPLAIAVMDSSFRMGSMGSVVGEKIARAVERAHEQRMPFLIFTASGGARMQEGVLSLMQMAKTSAALKRFSNDGGLFISVMTHPTTGGVSASFASLGDYNFAEPGALIGFAGRRVIEQTVREELPEDFQTAEFLLKHGQLDAVIHRHELKEKLAVVLAIHAGGGESGWWRN.

In terms of domain architecture, CoA carboxyltransferase N-terminal spans Val28–Asn290. 4 residues coordinate Zn(2+): Cys32, Cys35, Cys51, and Cys54. The C4-type zinc finger occupies Cys32 to Cys54.

The protein belongs to the AccD/PCCB family. In terms of assembly, acetyl-CoA carboxylase is a heterohexamer composed of biotin carboxyl carrier protein (AccB), biotin carboxylase (AccC) and two subunits each of ACCase subunit alpha (AccA) and ACCase subunit beta (AccD). The cofactor is Zn(2+).

It is found in the cytoplasm. It carries out the reaction N(6)-carboxybiotinyl-L-lysyl-[protein] + acetyl-CoA = N(6)-biotinyl-L-lysyl-[protein] + malonyl-CoA. It participates in lipid metabolism; malonyl-CoA biosynthesis; malonyl-CoA from acetyl-CoA: step 1/1. Its function is as follows. Component of the acetyl coenzyme A carboxylase (ACC) complex. Biotin carboxylase (BC) catalyzes the carboxylation of biotin on its carrier protein (BCCP) and then the CO(2) group is transferred by the transcarboxylase to acetyl-CoA to form malonyl-CoA. This is Acetyl-coenzyme A carboxylase carboxyl transferase subunit beta from Geobacillus thermodenitrificans (strain NG80-2).